The chain runs to 673 residues: MATAASGPCAGGSPRDILWRVLGWRIVTSIVWSVVLLPVCITAFIVLSSINLFHPIQWLSDSCNDFYSSQVIFHLLLLAVVIIIISIFNVEFYTVVPSISGSRLALIARILHPQQLTHSFIHAAMGMAVAWCAAIMTKGQYSSLVVPCTGTESLDSPAAQTCLNEYHLFFLLSGAFMGYSYSLLYFINNMNYLPFPIIQQYKFLRFRRSLLLLVKHSCVESLFMVRNFCIVYYFFGHIPKAWISTALDLHTDEQAHRPLDTIGGLLNVSLLYHVWLCGVFLLVTWYSSWILFKIYATEAHVFPVQPPFAEASDECLPKVLNSNPPRIVKYLALQDLMLLSQYSPSRRQEVFSLSQPGGHPHNWTAISRECLNLLNDMTQKLVLYQEAAATNGRMYSSYSVEPKKLSSAEETAFQTPKPSQTPSVPPLVKTSLFSPKLSTPNVSSPFGTPFGSSVVNRMAGILDVNPFSGSPQSPQLIRRGPRLWTHTSDQQVSAISNPSPCASVTAEGKTVRQPSVIYSWIQNKREQIKNFLSKRVLIMYFFSKHPEASIQAVFSDAQMHIWALEGLSHLVAASFTEDRFGVVQTTLPAILHTLLTLQEAVDKYFKLPHASSKPPRASGSLVDTSYKTLRFAFRASLKTAIYRITTTFGEHLNAVQASAEHQKRLQQFLEFKE.

The Cytoplasmic segment spans residues 1–25; it reads MATAASGPCAGGSPRDILWRVLGWR. The helical transmembrane segment at 26–46 threads the bilayer; sequence IVTSIVWSVVLLPVCITAFIV. Over 47 to 71 the chain is Perinuclear space; the sequence is LSSINLFHPIQWLSDSCNDFYSSQV. Residues 72 to 92 form a helical membrane-spanning segment; it reads IFHLLLLAVVIIIISIFNVEF. The Cytoplasmic segment spans residues 93–115; that stretch reads YTVVPSISGSRLALIARILHPQQ. The chain crosses the membrane as a helical span at residues 116-136; it reads LTHSFIHAAMGMAVAWCAAIM. Topologically, residues 137–166 are perinuclear space; that stretch reads TKGQYSSLVVPCTGTESLDSPAAQTCLNEY. The chain crosses the membrane as a helical span at residues 167–187; that stretch reads HLFFLLSGAFMGYSYSLLYFI. Residues 188 to 226 are Cytoplasmic-facing; the sequence is NNMNYLPFPIIQQYKFLRFRRSLLLLVKHSCVESLFMVR. A helical transmembrane segment spans residues 227–247; it reads NFCIVYYFFGHIPKAWISTAL. Over 248–261 the chain is Perinuclear space; it reads DLHTDEQAHRPLDT. Residues 262-282 form a helical membrane-spanning segment; the sequence is IGGLLNVSLLYHVWLCGVFLL. Over 283–673 the chain is Cytoplasmic; sequence VTWYSSWILF…RLQQFLEFKE (391 aa). S407 is subject to Phosphoserine. T415 is subject to Phosphothreonine. S438 carries the post-translational modification Phosphoserine. T439 bears the Phosphothreonine mark. The residue at position 444 (S444) is a Phosphoserine. Position 448 is a phosphothreonine (T448). A phosphoserine mark is found at S470 and S473.

Belongs to the NDC1 family. In terms of assembly, interacts with the NUP35/NUP53. Phosphorylated.

It localises to the nucleus. The protein localises to the nuclear pore complex. It is found in the nucleus membrane. Its function is as follows. Component of the nuclear pore complex (NPC), which plays a key role in de novo assembly and insertion of NPC in the nuclear envelope. Required for NPC and nuclear envelope assembly, possibly by forming a link between the nuclear envelope membrane and soluble nucleoporins, thereby anchoring the NPC in the membrane. The sequence is that of Nucleoporin NDC1 (Ndc1) from Mus musculus (Mouse).